A 184-amino-acid chain; its full sequence is NEDD8-conjugating enzyme Ubc12 (184 aa).

In terms of domain architecture, UBC core spans 30–175 (AGELRLHKDI…VRRAMTGGYV (146 aa)). The Glycyl thioester intermediate role is filled by Cys-113.

Belongs to the ubiquitin-conjugating enzyme family. UBC12 subfamily. As to quaternary structure, interacts with RBX1. Expressed in shoot, root and floral meristems, and in vascular tissues of leaves.

The protein operates within protein modification; protein neddylation. Functionally, accepts the ubiquitin-like protein NEDD8/RUB1 from the ECR1-AXR1 E1 complex and catalyzes its covalent attachment to other proteins. This Arabidopsis thaliana (Mouse-ear cress) protein is NEDD8-conjugating enzyme Ubc12 (RCE1).